The chain runs to 103 residues: Nucleoid-associated protein Anae109_3761 (103 aa).

The protein belongs to the YbaB/EbfC family. Homodimer.

The protein resides in the cytoplasm. The protein localises to the nucleoid. In terms of biological role, binds to DNA and alters its conformation. May be involved in regulation of gene expression, nucleoid organization and DNA protection. The polypeptide is Nucleoid-associated protein Anae109_3761 (Anaeromyxobacter sp. (strain Fw109-5)).